The sequence spans 319 residues: Aspartate carbamoyltransferase catalytic subunit (319 aa).

Residues arginine 64 and threonine 65 each contribute to the carbamoyl phosphate site. Residue lysine 92 coordinates L-aspartate. Arginine 114, histidine 142, and glutamine 145 together coordinate carbamoyl phosphate. L-aspartate contacts are provided by arginine 175 and arginine 229. Carbamoyl phosphate-binding residues include glycine 270 and proline 271.

This sequence belongs to the aspartate/ornithine carbamoyltransferase superfamily. ATCase family. Heterododecamer (2C3:3R2) of six catalytic PyrB chains organized as two trimers (C3), and six regulatory PyrI chains organized as three dimers (R2).

The catalysed reaction is carbamoyl phosphate + L-aspartate = N-carbamoyl-L-aspartate + phosphate + H(+). It participates in pyrimidine metabolism; UMP biosynthesis via de novo pathway; (S)-dihydroorotate from bicarbonate: step 2/3. Catalyzes the condensation of carbamoyl phosphate and aspartate to form carbamoyl aspartate and inorganic phosphate, the committed step in the de novo pyrimidine nucleotide biosynthesis pathway. The chain is Aspartate carbamoyltransferase catalytic subunit from Rhodospirillum rubrum (strain ATCC 11170 / ATH 1.1.1 / DSM 467 / LMG 4362 / NCIMB 8255 / S1).